The sequence spans 595 residues: Elongation factor 4 (595 aa).

The 183-residue stretch at 2-184 (SHIRNFSIIA…RLVATIPAPT (183 aa)) folds into the tr-type G domain. Residues 14–19 (DHGKST) and 131–134 (NKMD) each bind GTP.

The protein belongs to the TRAFAC class translation factor GTPase superfamily. Classic translation factor GTPase family. LepA subfamily.

Its subcellular location is the cell inner membrane. It carries out the reaction GTP + H2O = GDP + phosphate + H(+). Its function is as follows. Required for accurate and efficient protein synthesis under certain stress conditions. May act as a fidelity factor of the translation reaction, by catalyzing a one-codon backward translocation of tRNAs on improperly translocated ribosomes. Back-translocation proceeds from a post-translocation (POST) complex to a pre-translocation (PRE) complex, thus giving elongation factor G a second chance to translocate the tRNAs correctly. Binds to ribosomes in a GTP-dependent manner. This Pseudomonas savastanoi pv. phaseolicola (strain 1448A / Race 6) (Pseudomonas syringae pv. phaseolicola (strain 1448A / Race 6)) protein is Elongation factor 4.